The primary structure comprises 209 residues: Octanoyltransferase (209 aa).

Residues 30 to 209 (DHEPEIIYLV…IQTEFNKIFK (180 aa)) enclose the BPL/LPL catalytic domain. Substrate contacts are provided by residues 69 to 76 (RGGKFTFH), 143 to 145 (AIG), and 156 to 158 (GVA). Cys174 (acyl-thioester intermediate) is an active-site residue.

This sequence belongs to the LipB family.

Its subcellular location is the cytoplasm. The catalysed reaction is octanoyl-[ACP] + L-lysyl-[protein] = N(6)-octanoyl-L-lysyl-[protein] + holo-[ACP] + H(+). It functions in the pathway protein modification; protein lipoylation via endogenous pathway; protein N(6)-(lipoyl)lysine from octanoyl-[acyl-carrier-protein]: step 1/2. Functionally, catalyzes the transfer of endogenously produced octanoic acid from octanoyl-acyl-carrier-protein onto the lipoyl domains of lipoate-dependent enzymes. Lipoyl-ACP can also act as a substrate although octanoyl-ACP is likely to be the physiological substrate. The chain is Octanoyltransferase from Rickettsia peacockii (strain Rustic).